The primary structure comprises 108 residues: UPF0102 protein Sputcn32_3693 (108 aa).

This sequence belongs to the UPF0102 family.

The polypeptide is UPF0102 protein Sputcn32_3693 (Shewanella putrefaciens (strain CN-32 / ATCC BAA-453)).